The following is a 406-amino-acid chain: Argininosuccinate synthase (406 aa).

8-16 (AYSGGLDTS) provides a ligand contact to ATP. Tyr-86 is a binding site for L-citrulline. ATP is bound at residue Gly-116. 3 residues coordinate L-aspartate: Thr-118, Asn-122, and Asp-123. Asn-122 is an L-citrulline binding site. Arg-126, Ser-174, Glu-259, and Tyr-271 together coordinate L-citrulline.

It belongs to the argininosuccinate synthase family. Type 1 subfamily. In terms of assembly, homotetramer.

The protein resides in the cytoplasm. It catalyses the reaction L-citrulline + L-aspartate + ATP = 2-(N(omega)-L-arginino)succinate + AMP + diphosphate + H(+). Its pathway is amino-acid biosynthesis; L-arginine biosynthesis; L-arginine from L-ornithine and carbamoyl phosphate: step 2/3. The polypeptide is Argininosuccinate synthase (Lacticaseibacillus paracasei (strain ATCC 334 / BCRC 17002 / CCUG 31169 / CIP 107868 / KCTC 3260 / NRRL B-441) (Lactobacillus paracasei)).